A 167-amino-acid chain; its full sequence is Glucose-6-phosphate isomerase (167 aa).

The active-site Proton donor is the glutamate 54. Residue histidine 85 is part of the active site.

It belongs to the GPI family.

It is found in the cytoplasm. It carries out the reaction alpha-D-glucose 6-phosphate = beta-D-fructose 6-phosphate. It participates in carbohydrate biosynthesis; gluconeogenesis. The protein operates within carbohydrate degradation; glycolysis; D-glyceraldehyde 3-phosphate and glycerone phosphate from D-glucose: step 2/4. Its function is as follows. Catalyzes the reversible isomerization of glucose-6-phosphate to fructose-6-phosphate. The polypeptide is Glucose-6-phosphate isomerase (Klebsiella oxytoca).